The primary structure comprises 812 residues: Endogenous retrovirus group K member 18 Pol protein (812 aa).

Positions L57 to I245 constitute a Reverse transcriptase domain. Residues L161–G164 carry the LPQG motif. Positions Y195–D198 match the YXDD motif. The RNase H type-1 domain maps to L460–I590. Residues D469, E497, D517, and D582 each contribute to the Mg(2+) site. The Integrase-type zinc finger occupies S587–Q628. Zn(2+)-binding residues include H596, H600, C624, and C627. In terms of domain architecture, Integrase catalytic spans A637–K803.

This sequence belongs to the beta type-B retroviral polymerase family. HERV class-II K(HML-2) pol subfamily.

The catalysed reaction is DNA(n) + a 2'-deoxyribonucleoside 5'-triphosphate = DNA(n+1) + diphosphate. The enzyme catalyses Endonucleolytic cleavage to 5'-phosphomonoester.. In terms of biological role, early post-infection, the reverse transcriptase converts the viral RNA genome into double-stranded viral DNA. The RNase H domain of the reverse transcriptase performs two functions. It degrades the RNA template and specifically removes the RNA primer from the RNA/DNA hybrid. Following nuclear import, the integrase catalyzes the insertion of the linear, double-stranded viral DNA into the host cell chromosome. Endogenous Pol proteins may have kept, lost or modified their original function during evolution. The polypeptide is Endogenous retrovirus group K member 18 Pol protein (ERVK-18) (Homo sapiens (Human)).